Consider the following 2209-residue polypeptide: Orsellinic acid synthase armB (2209 aa).

The tract at residues 38–261 is N-terminal acylcarrier protein transacylase domain (SAT); it reads LLLDACYYAF…HKTTVDALYH (224 aa). The Ketosynthase family 3 (KS3) domain occupies 391-817; that stretch reads QEPIAICGMS…GSNGALLLEE (427 aa). Active-site for beta-ketoacyl synthase activity residues include Cys561, His696, and His736. A malonyl-CoA:ACP transacylase (MAT) domain region spans residues 914–1239; that stretch reads VFVFSGQGGQ…NLTLSSSLSQ (326 aa). Ser1008 serves as the catalytic For acyl/malonyl transferase activity. The N-terminal hotdog fold stretch occupies residues 1306–1436; it reads MLQSWAQFPS…GQFRPLLVAD (131 aa). A PKS/mFAS DH domain is found at 1306-1613; the sequence is MLQSWAQFPS…FKKLRLNTLQ (308 aa). Residues 1335–1610 are product template (PT) domain; it reads ITGHIVGDVP…GMCFKKLRLN (276 aa). The active-site Proton acceptor; for dehydratase activity is the His1338. The C-terminal hotdog fold stretch occupies residues 1463 to 1613; it reads AEVITTRTAY…FKKLRLNTLQ (151 aa). The active-site Proton donor; for dehydratase activity is Asp1524. Carrier domains lie at 1659–1734 and 1844–1921; these read VDVQ…SSTI and SSSS…SSKQ. An O-(pantetheine 4'-phosphoryl)serine mark is found at Ser1693 and Ser1881. The disordered stretch occupies residues 1917–1945; sequence ISSKQPGKSPKPSEEATMDPDKEEDLSDL. Over residues 1932-1943 the composition is skewed to acidic residues; it reads ATMDPDKEEDLS. Positions 1962 to 2201 are thioesterase (TE) domain; sequence VPMSVQKSSS…LGAVTQALVD (240 aa).

It carries out the reaction 3 malonyl-CoA + acetyl-CoA + 2 H(+) = orsellinate + 3 CO2 + 4 CoA. The protein operates within secondary metabolite biosynthesis. In terms of biological role, non-reducing polyketide synthase, part of the gene cluster that mediates the biosynthesis of melleolides, a range of antifungal and phytotoxic polyketide derivatives composed of an orsellinic acid (OA) moiety esterified to various sesquiterpene alcohols. The first step in melleolides biosynthesis is performed by the delta(6)-protoilludene synthase PRO1 which catalyzes the cyclization of farnesyl diphosphate to protoilludene. The orsellinic acid synthase armB produces OA by condensing acetyl-CoA with 3 malonyl-CoA units in a three-round chain elongation reaction folowed by a C2-C7 ring closure. ArmB further catalyzes the trans-esterification of OA to the various sesquiterpene alcohols resulting from the hydroxylation of protoilludene. The melleolides cluster also includes 5 cytochrome P450 monooxygenases, 4 NAD(+)-dependent oxidoreductases, one flavin-dependent oxidoreductase, and one O-methyltransferase. The cytochrome P450 monooxygenases may be involved in protoilludene hydroxylation to elaborate melleolides with multiple alcohol groups, such as melleolide D, which carries alcohol functionalities at C-4, C-5, C-10, and C-13. The role of the NAD(+)-dependent enzymes remains unknown. Numerous melleolides, including arnamial, show 5'-O-methylation of the aromatic moiety which may be catalyzed by the methyltransferase encoded in the cluster. The flavin-dependent oxidoreductase might represent the dehydrogenase yielding the aldehyde in position 1 of arnamial and other melleolides. Finally, several halogenase localized outside of the cluster (armH1 to armH5), are able to catalyze the transfer of a single chlorine atom to the melleolide backbone, resulting in a 6'-chloromelleolide product. The sequence is that of Orsellinic acid synthase armB from Armillaria mellea (Honey mushroom).